The sequence spans 391 residues: Mannonate dehydratase (391 aa).

Residues Glu334 to Leu359 are disordered.

The protein belongs to the mannonate dehydratase family. It depends on Fe(2+) as a cofactor. Requires Mn(2+) as cofactor.

The catalysed reaction is D-mannonate = 2-dehydro-3-deoxy-D-gluconate + H2O. The protein operates within carbohydrate metabolism; pentose and glucuronate interconversion. Catalyzes the dehydration of D-mannonate. This is Mannonate dehydratase from Chromohalobacter salexigens (strain ATCC BAA-138 / DSM 3043 / CIP 106854 / NCIMB 13768 / 1H11).